A 531-amino-acid polypeptide reads, in one-letter code: Apolipoprotein N-acyltransferase (531 aa).

Transmembrane regions (helical) follow at residues 8-28 (IILL…LLAV), 34-54 (FGIF…IDGV), 69-89 (PAAI…WWLG), 105-125 (LAVV…VVIA), 136-156 (IAAL…VFTG), 178-198 (VVNL…PALI), and 207-227 (GLAI…YRLA). Positions 243–493 (VQPVIDQAKK…RGVLDTILPG (251 aa)) constitute a CN hydrolase domain. The active-site Proton acceptor is the glutamate 287. Residue lysine 351 is part of the active site. Cysteine 405 (nucleophile) is an active-site residue. The chain crosses the membrane as a helical span at residues 507–527 (IFWLSMAILSIVASFSRFGFN).

This sequence belongs to the CN hydrolase family. Apolipoprotein N-acyltransferase subfamily.

The protein localises to the cell inner membrane. It carries out the reaction N-terminal S-1,2-diacyl-sn-glyceryl-L-cysteinyl-[lipoprotein] + a glycerophospholipid = N-acyl-S-1,2-diacyl-sn-glyceryl-L-cysteinyl-[lipoprotein] + a 2-acyl-sn-glycero-3-phospholipid + H(+). Its pathway is protein modification; lipoprotein biosynthesis (N-acyl transfer). In terms of biological role, catalyzes the phospholipid dependent N-acylation of the N-terminal cysteine of apolipoprotein, the last step in lipoprotein maturation. This Sinorhizobium medicae (strain WSM419) (Ensifer medicae) protein is Apolipoprotein N-acyltransferase.